The sequence spans 295 residues: Phosphatidylserine decarboxylase proenzyme (295 aa).

Residues Asp-90, His-147, and Ser-254 each act as charge relay system; for autoendoproteolytic cleavage activity in the active site. The active-site Schiff-base intermediate with substrate; via pyruvic acid; for decarboxylase activity is Ser-254. Position 254 is a pyruvic acid (Ser); by autocatalysis (Ser-254).

It belongs to the phosphatidylserine decarboxylase family. PSD-B subfamily. Prokaryotic type I sub-subfamily. In terms of assembly, heterodimer of a large membrane-associated beta subunit and a small pyruvoyl-containing alpha subunit. It depends on pyruvate as a cofactor. In terms of processing, is synthesized initially as an inactive proenzyme. Formation of the active enzyme involves a self-maturation process in which the active site pyruvoyl group is generated from an internal serine residue via an autocatalytic post-translational modification. Two non-identical subunits are generated from the proenzyme in this reaction, and the pyruvate is formed at the N-terminus of the alpha chain, which is derived from the carboxyl end of the proenzyme. The autoendoproteolytic cleavage occurs by a canonical serine protease mechanism, in which the side chain hydroxyl group of the serine supplies its oxygen atom to form the C-terminus of the beta chain, while the remainder of the serine residue undergoes an oxidative deamination to produce ammonia and the pyruvoyl prosthetic group on the alpha chain. During this reaction, the Ser that is part of the protease active site of the proenzyme becomes the pyruvoyl prosthetic group, which constitutes an essential element of the active site of the mature decarboxylase.

It is found in the cell membrane. It catalyses the reaction a 1,2-diacyl-sn-glycero-3-phospho-L-serine + H(+) = a 1,2-diacyl-sn-glycero-3-phosphoethanolamine + CO2. The protein operates within phospholipid metabolism; phosphatidylethanolamine biosynthesis; phosphatidylethanolamine from CDP-diacylglycerol: step 2/2. Its function is as follows. Catalyzes the formation of phosphatidylethanolamine (PtdEtn) from phosphatidylserine (PtdSer). This chain is Phosphatidylserine decarboxylase proenzyme, found in Sodalis glossinidius (strain morsitans).